The chain runs to 250 residues: Acidic endochitinase (250 aa).

Glutamine 1 is subject to Pyrrolidone carboxylic acid. The Chitin-binding type-1 domain occupies 1 to 36 (QNCQCDTTIYCCSQHGYCGNSYDYCGPGCQAGPCWD). 7 cysteine pairs are disulfide-bonded: cysteine 3–cysteine 12, cysteine 5–cysteine 18, cysteine 11–cysteine 25, cysteine 29–cysteine 34, cysteine 66–cysteine 115, cysteine 128–cysteine 136, and cysteine 218–cysteine 250. Glutamate 110 (proton donor) is an active-site residue.

The protein belongs to the glycosyl hydrolase 19 family. Chitinase class I subfamily.

The catalysed reaction is Random endo-hydrolysis of N-acetyl-beta-D-glucosaminide (1-&gt;4)-beta-linkages in chitin and chitodextrins.. Functionally, defense against chitin-containing fungal pathogens. This Dioscorea japonica (Japanese yam) protein is Acidic endochitinase.